A 233-amino-acid chain; its full sequence is Protein AC81 (233 aa).

Transmembrane regions (helical) follow at residues 171-191 (SFQTVLLTCAILLLLFNVEKF) and 194-214 (INLLIILLILLSLFCHNNYII).

The protein resides in the host nucleus. Its subcellular location is the host membrane. It is found in the virion. In terms of biological role, plays an essential role in the assembly of nucleocapsids with envelopes. This Autographa californica nuclear polyhedrosis virus (AcMNPV) protein is Protein AC81 (AC81).